Consider the following 377-residue polypeptide: Opsin-2 (377 aa).

The Extracellular portion of the chain corresponds to 1–57 (MNNQSENYYHGAQFEALKSAGAIEMLGDGLTGDDLAAIPEHWLSYPAPPASAHTALA). A glycan (N-linked (GlcNAc...) asparagine) is linked at Asn-3. Residues 58 to 78 (LLYIFFTFAALVGNGMVIFIF) form a helical membrane-spanning segment. At 79–89 (STTKSLRTSSN) the chain is on the cytoplasmic side. A helical membrane pass occupies residues 90–110 (FLVLNLAILDFIMMAKAPIFI). The Extracellular segment spans residues 111–126 (YNSAMRGFAVGTVGCQ). Cys-125 and Cys-202 are disulfide-bonded. A helical transmembrane segment spans residues 127–146 (IFALMGAYSGIGAGMTNACI). The Cytoplasmic portion of the chain corresponds to 147–166 (AYDRHSTITRPLDGRLSEGK). A helical transmembrane segment spans residues 167–187 (VLLMVAFVWIYSTPWALLPLL). The Extracellular portion of the chain corresponds to 188-214 (KIWGRYVPEGYLTSCSFDYLTNTFDTK). A helical transmembrane segment spans residues 215–235 (LFVACIFTCSYVFPMSLIIYF). The Cytoplasmic segment spans residues 236-283 (YSGIVKQVFAHEAALREQAKKMNVESLRANQGGSSESAEIRIAKAALT). A helical transmembrane segment spans residues 284-304 (VCFLFVASWTPYGVMALIGAF). Residues 305-314 (GNQQLLTPGV) lie on the Extracellular side of the membrane. The chain crosses the membrane as a helical span at residues 315-335 (TMIPAVACKAVACISPWVYAI). At 336–377 (RHPMYRQELQRRMPWLQIDEPDDTVSTATSNTTNSAPPAATA) the chain is on the cytoplasmic side. Residues 355–377 (EPDDTVSTATSNTTNSAPPAATA) are disordered. Low complexity predominate over residues 361 to 377 (STATSNTTNSAPPAATA).

This sequence belongs to the G-protein coupled receptor 1 family. Opsin subfamily. In the retina, expression is essentially uniformly distributed, but a higher level is seen in the dorsal region of the retina and in the dorsal rim retinulae.

The protein localises to the membrane. Functionally, visual pigments are the light-absorbing molecules that mediate vision. They consist of an apoprotein, opsin, covalently linked to cis-retinal. May play a role in photoperiodic photoreception. In Manduca sexta (Tobacco hawkmoth), this protein is Opsin-2 (OP2).